A 354-amino-acid chain; its full sequence is Macrosialin (354 aa).

The first 21 residues, 1–21 (MRLAVLFSGALLGLLAAQGTG), serve as a signal peptide directing secretion. Residues 22 to 319 (NDCPHKKSAT…QSFSCPSDRS (298 aa)) lie on the Extracellular side of the membrane. A mucin-like region spans residues 23-140 (DCPHKKSATL…SPGFTSSAHP (118 aa)). The span at 40-51 (PTVTESTGTTSH) shows a compositional bias: low complexity. Residues 40–162 (PTVTESTGTT…SKETIGDYTW (123 aa)) are disordered. The span at 52–61 (RTTKSHKTTT) shows a compositional bias: basic residues. Residues 62–84 (HRTTTTGTTSHGPTTATHNPTTT) show a composition bias toward low complexity. 2 consecutive repeat copies span residues 70 to 99 (TSHG…NSTA) and 100 to 129 (TSQG…NSTA). The 2 X 30 AA tandem repeats stretch occupies residues 70–129 (TSHGPTTATHNPTTTSHGNVTVHPTSNSTATSQGPSTATHSPATTSHGNATVHPTSNSTA). Residues 85 to 102 (SHGNVTVHPTSNSTATSQ) show a composition bias toward polar residues. 2 N-linked (GlcNAc...) asparagine glycosylation sites follow: N88 and N96. The span at 103–117 (GPSTATHSPATTSHG) shows a compositional bias: low complexity. 2 N-linked (GlcNAc...) asparagine glycosylation sites follow: N118 and N126. The span at 121–135 (VHPTSNSTATSPGFT) shows a compositional bias: polar residues. A compositionally biased stretch (pro residues) spans 140–150 (PEPPPPSPSPS). Residues N164, N199, N246, N261, and N279 are each glycosylated (N-linked (GlcNAc...) asparagine). C169 and C207 form a disulfide bridge. The cysteines at positions 277 and 314 are disulfide-linked. Residues 320–344 (ILLPLIIGLILLGLLALVLIAFCII) traverse the membrane as a helical segment. Residues 345 to 354 (RRRPSAYQAL) lie on the Cytoplasmic side of the membrane.

It belongs to the LAMP family. N- and O-glycosylated. Highly expressed by blood monocytes and tissue macrophages. Also expressed in lymphocytes, fibroblasts and endothelial cells. Expressed in many tumor cell lines which could allow them to attach to selectins on vascular endothelium, facilitating their dissemination to secondary sites.

The protein resides in the cell membrane. Its subcellular location is the endosome membrane. It is found in the lysosome membrane. In terms of biological role, could play a role in phagocytic activities of tissue macrophages, both in intracellular lysosomal metabolism and extracellular cell-cell and cell-pathogen interactions. Binds to tissue- and organ-specific lectins or selectins, allowing homing of macrophage subsets to particular sites. Rapid recirculation of CD68 from endosomes and lysosomes to the plasma membrane may allow macrophages to crawl over selectin-bearing substrates or other cells. In Homo sapiens (Human), this protein is Macrosialin (CD68).